The chain runs to 672 residues: MDALQLLTWSLILYLFASLASLFLLGLDRLAIKLSGITSLVGGVIGIISGITQLHAGVTLVARFAPPFEFADLTLRMDSLSAFMVLVISLLVVVCSLYSLTYMREYEGKGAAAMGFFMNIFIASMVALLVMDNAFWFIVLFEMMSLSSWFLVIARQDKTSINAGMLYFFIAHAGSVLIMIAFLLMGRESGSLDFASFRTLSLSPGLASAVFLLAFFGFGAKAGMMPLHSWLPRAHPAAPSHASALMSGVMVKIGIFGILKVAMDLLAQTGLPLWWGILVMAIGAISALLGVLYALAEQDIKRLLAWSTVENVGIILLAVGVAMVGLSLHDPLLTVVGLLGALFHLLNHALFKGLLFLGAGAIISRLHTHDMEKMGALAKRMPWTAAACLIGCLAISAIPPLNGFISEWYTWQSLFSLSRVEAVALQLAGPIAMVMLAVTGGLAVMCFVKMYGITFCGAPRSTHAEEAQEVPNTMIVAMLLLAALCVLIALSASWLAPKIMHIAHAFTNTPPATVASGIALVPGTFHTQVTPSLLLLLLLAMPLLPGLYWLWCRSRRAAFRRTGDAWACGYGWENAMAPSGNGVMQPLRVVFSALFRLRQQLDPTLRLNKGLAHVTARAQSTEPFWDERVIRPIVSATQRLAKEIQHLQSGDFRLYCLYVVAALVVLLIAIAV.

The Periplasmic portion of the chain corresponds to 1–5; that stretch reads MDALQ. The helical transmembrane segment at 6–26 threads the bilayer; the sequence is LLTWSLILYLFASLASLFLLG. The Cytoplasmic portion of the chain corresponds to 27-30; it reads LDRL. Residues 31-51 form a helical membrane-spanning segment; sequence AIKLSGITSLVGGVIGIISGI. Residues 52-79 are Periplasmic-facing; that stretch reads TQLHAGVTLVARFAPPFEFADLTLRMDS. The chain crosses the membrane as a helical span at residues 80-100; that stretch reads LSAFMVLVISLLVVVCSLYSL. The Cytoplasmic segment spans residues 101–119; it reads TYMREYEGKGAAAMGFFMN. Residues 120–140 traverse the membrane as a helical segment; that stretch reads IFIASMVALLVMDNAFWFIVL. Residues 141 to 164 are Periplasmic-facing; sequence FEMMSLSSWFLVIARQDKTSINAG. A helical membrane pass occupies residues 165–185; it reads MLYFFIAHAGSVLIMIAFLLM. Residues 186–199 are Cytoplasmic-facing; the sequence is GRESGSLDFASFRT. The helical transmembrane segment at 200-220 threads the bilayer; sequence LSLSPGLASAVFLLAFFGFGA. Residues 221-242 are Periplasmic-facing; that stretch reads KAGMMPLHSWLPRAHPAAPSHA. The chain crosses the membrane as a helical span at residues 243 to 263; the sequence is SALMSGVMVKIGIFGILKVAM. Topologically, residues 264–272 are cytoplasmic; that stretch reads DLLAQTGLP. Residues 273–293 traverse the membrane as a helical segment; sequence LWWGILVMAIGAISALLGVLY. Residues 294-311 are Periplasmic-facing; that stretch reads ALAEQDIKRLLAWSTVEN. A helical transmembrane segment spans residues 312–332; the sequence is VGIILLAVGVAMVGLSLHDPL. Topologically, residues 333 to 342 are cytoplasmic; sequence LTVVGLLGAL. A helical transmembrane segment spans residues 343–363; the sequence is FHLLNHALFKGLLFLGAGAII. Over 364–384 the chain is Periplasmic; that stretch reads SRLHTHDMEKMGALAKRMPWT. Residues 385 to 405 form a helical membrane-spanning segment; that stretch reads AAACLIGCLAISAIPPLNGFI. Residues 406 to 427 lie on the Cytoplasmic side of the membrane; it reads SEWYTWQSLFSLSRVEAVALQL. A helical membrane pass occupies residues 428 to 448; it reads AGPIAMVMLAVTGGLAVMCFV. Topologically, residues 449–474 are periplasmic; it reads KMYGITFCGAPRSTHAEEAQEVPNTM. Residues 475-495 form a helical membrane-spanning segment; sequence IVAMLLLAALCVLIALSASWL. Residues 496-504 lie on the Cytoplasmic side of the membrane; it reads APKIMHIAH. Residues 505-525 form a helical membrane-spanning segment; that stretch reads AFTNTPPATVASGIALVPGTF. The Periplasmic segment spans residues 526–531; the sequence is HTQVTP. Residues 532–552 form a helical membrane-spanning segment; sequence SLLLLLLLAMPLLPGLYWLWC. Topologically, residues 553–651 are cytoplasmic; it reads RSRRAAFRRT…KEIQHLQSGD (99 aa). The helical transmembrane segment at 652 to 672 threads the bilayer; the sequence is FRLYCLYVVAALVVLLIAIAV.

This sequence belongs to the complex I subunit 5 family.

It is found in the cell inner membrane. Its function is as follows. Possible component of hydrogenase 4. The sequence is that of Hydrogenase-4 component B from Escherichia coli (strain K12).